The following is a 217-amino-acid chain: UPF0502 protein Smlt0097 (217 aa).

Belongs to the UPF0502 family.

This Stenotrophomonas maltophilia (strain K279a) protein is UPF0502 protein Smlt0097.